The primary structure comprises 144 residues: uncharacterized protein (144 aa).

The signal sequence occupies residues M1–S22.

This is an uncharacterized protein from Saccharomyces cerevisiae (strain ATCC 204508 / S288c) (Baker's yeast).